The following is a 200-amino-acid chain: Cuticle protein 21.3 (200 aa).

A run of 10 repeats spans residues 98–101, 104–107, 116–119, 121–124, 133–136, 154–157, 166–169, 178–181, 184–187, and 196–199.

Functionally, component of the cuticle of migratory locust which contains more than 100 different structural proteins. In Locusta migratoria (Migratory locust), this protein is Cuticle protein 21.3.